The following is a 272-amino-acid chain: Flagellin (272 aa).

This sequence belongs to the bacterial flagellin family.

The protein resides in the secreted. The protein localises to the bacterial flagellum. Functionally, flagellin is the subunit protein which polymerizes to form the filaments of bacterial flagella. In Halalkalibacterium halodurans (strain ATCC BAA-125 / DSM 18197 / FERM 7344 / JCM 9153 / C-125) (Bacillus halodurans), this protein is Flagellin (hag).